The sequence spans 275 residues: Type III pantothenate kinase (275 aa).

9 to 16 provides a ligand contact to ATP; that stretch reads DIGNTRLK. Residues Tyr114 and 121 to 124 contribute to the substrate site; that span reads GVDR. Asp123 functions as the Proton acceptor in the catalytic mechanism. Thr147 provides a ligand contact to ATP. Thr209 provides a ligand contact to substrate.

Belongs to the type III pantothenate kinase family. Homodimer. The cofactor is NH4(+). K(+) is required as a cofactor.

The protein localises to the cytoplasm. The enzyme catalyses (R)-pantothenate + ATP = (R)-4'-phosphopantothenate + ADP + H(+). The protein operates within cofactor biosynthesis; coenzyme A biosynthesis; CoA from (R)-pantothenate: step 1/5. In terms of biological role, catalyzes the phosphorylation of pantothenate (Pan), the first step in CoA biosynthesis. The chain is Type III pantothenate kinase from Cupriavidus pinatubonensis (strain JMP 134 / LMG 1197) (Cupriavidus necator (strain JMP 134)).